Here is a 119-residue protein sequence, read N- to C-terminus: Holo-[acyl-carrier-protein] synthase (119 aa).

The Mg(2+) site is built by D8 and E50.

This sequence belongs to the P-Pant transferase superfamily. AcpS family. Requires Mg(2+) as cofactor.

It is found in the cytoplasm. It catalyses the reaction apo-[ACP] + CoA = holo-[ACP] + adenosine 3',5'-bisphosphate + H(+). Transfers the 4'-phosphopantetheine moiety from coenzyme A to a Ser of acyl-carrier-protein. This is Holo-[acyl-carrier-protein] synthase from Clavibacter michiganensis subsp. michiganensis (strain NCPPB 382).